A 688-amino-acid chain; its full sequence is Glycine--tRNA ligase beta subunit (688 aa).

Belongs to the class-II aminoacyl-tRNA synthetase family. In terms of assembly, tetramer of two alpha and two beta subunits.

The protein resides in the cytoplasm. The catalysed reaction is tRNA(Gly) + glycine + ATP = glycyl-tRNA(Gly) + AMP + diphosphate. The chain is Glycine--tRNA ligase beta subunit from Lactobacillus delbrueckii subsp. bulgaricus (strain ATCC BAA-365 / Lb-18).